A 503-amino-acid polypeptide reads, in one-letter code: ATP-dependent RNA helicase dbp3 (503 aa).

Over residues 1-25 (MAKRVQHEGGDYRPQKRSKNERNGE) the composition is skewed to basic and acidic residues. Positions 1-35 (MAKRVQHEGGDYRPQKRSKNERNGEGSKVSPSAEA) are disordered. Residues 104–112 (SFSSPTPIQ) carry the Q motif motif. A Helicase ATP-binding domain is found at 116 to 292 (WPLLFAGRDV…ATFMTSAVTV (177 aa)). 129–136 (AETGSGKT) contacts ATP. The DEAD box signature appears at 239-242 (DEAD). Residues 307-472 (RIKQVVEVVK…DVPDALLKFG (166 aa)) enclose the Helicase C-terminal domain.

Belongs to the DEAD box helicase family. DDX5/DBP2 subfamily.

Its subcellular location is the nucleus. The protein localises to the nucleolus. The catalysed reaction is ATP + H2O = ADP + phosphate + H(+). ATP-dependent RNA helicase required for 60S ribosomal subunit synthesis. Involved in efficient pre-rRNA processing, predominantly at site A3, which is necessary for the normal formation of 25S and 5.8S rRNAs. This is ATP-dependent RNA helicase dbp3 (dbp3) from Neosartorya fischeri (strain ATCC 1020 / DSM 3700 / CBS 544.65 / FGSC A1164 / JCM 1740 / NRRL 181 / WB 181) (Aspergillus fischerianus).